The primary structure comprises 526 residues: Vitamin B6 transporter bsu1 (526 aa).

The segment at 1–53 is disordered; the sequence is MASKIASLFSPSETASKDQHENVAEDLELGTASSQSDGIHETNSEYDEKKREE. The span at 38–53 shows a compositional bias: basic and acidic residues; it reads GIHETNSEYDEKKREE. Transmembrane regions (helical) follow at residues 81-101, 118-138, 147-167, 173-192, 204-224, 238-257, 314-330, 349-366, 387-407, 413-432, 444-461, and 480-501; these read WSIVFMFCLMQIYVIWTSNGF, VATLCLSMNILGSGLGPMFLG, KPVYFCSIFVYTVFNISCALP, MIISHFIIGVAGSTALTNVA, AGVPMSLFVWACAGGAIGAPM, WLYYINIIVGGFFLIVILII, LYNFYAYGISYFFLTAI, YLSGFVASTLLFLYQPIQ, FTSALFITLLFPAGMFLFAFT, PWMSPIVGNSMVTVANGHNW, PLLSGSAVAAFTLPSFIG, and WAVATMAFISISIPFIIYTFYF.

The protein belongs to the major facilitator superfamily. CAR1 family.

It localises to the membrane. Its function is as follows. Thiamine-regulated, high affinity import carrier of pyridoxine, pyridoxal and pyridoxamine. Also imports, but does not export, amiloride and so confers sensitivity. The sequence is that of Vitamin B6 transporter bsu1 (bsu1) from Schizosaccharomyces pombe (strain 972 / ATCC 24843) (Fission yeast).